Reading from the N-terminus, the 141-residue chain is VLSPADKTNIKSTWDKIGGHAGDYGGEALDRTFQSFPTTKTYFPHFDLSPGSAQVKAHGKKVADALTTAVAHLDDLPGALSALSDLHAYKLRVDPVNFKLLSHCLLVTLACHHPTEFTPAVHASLDKFFAAVSTVLTSKYR.

Positions 1-141 (VLSPADKTNI…VSTVLTSKYR (141 aa)) constitute a Globin domain. Ser3 carries the phosphoserine modification. At Lys7 the chain carries N6-succinyllysine. At Thr8 the chain carries Phosphothreonine. An N6-succinyllysine modification is found at Lys11. Residue Lys16 is modified to N6-acetyllysine; alternate. Lys16 carries the N6-succinyllysine; alternate modification. Tyr24 bears the Phosphotyrosine mark. At Ser35 the chain carries Phosphoserine. Residue Lys40 is modified to N6-succinyllysine. Ser49 is subject to Phosphoserine. His58 provides a ligand contact to O2. His87 serves as a coordination point for heme b. Residue Ser102 is modified to Phosphoserine. Phosphothreonine is present on Thr108. Phosphoserine is present on Ser124. Thr134 and Thr137 each carry phosphothreonine. Residue Ser138 is modified to Phosphoserine.

The protein belongs to the globin family. In terms of assembly, heterotetramer of two alpha chains and two beta chains. As to expression, red blood cells.

Functionally, involved in oxygen transport from the lung to the various peripheral tissues. Hemopressin acts as an antagonist peptide of the cannabinoid receptor CNR1. Hemopressin-binding efficiently blocks cannabinoid receptor CNR1 and subsequent signaling. This Canis lupus familiaris (Dog) protein is Hemoglobin subunit alpha (HBA).